The following is a 251-amino-acid chain: 2,3-bisphosphoglycerate-dependent phosphoglycerate mutase (251 aa).

Substrate-binding positions include 7–14 (RHGESEWN), 20–21 (TG), arginine 59, 86–89 (ERHY), lysine 97, 113–114 (RR), and 186–187 (GN). The active-site Tele-phosphohistidine intermediate is the histidine 8. The active-site Proton donor/acceptor is the glutamate 86.

This sequence belongs to the phosphoglycerate mutase family. BPG-dependent PGAM subfamily.

The enzyme catalyses (2R)-2-phosphoglycerate = (2R)-3-phosphoglycerate. Its pathway is carbohydrate degradation; glycolysis; pyruvate from D-glyceraldehyde 3-phosphate: step 3/5. Its function is as follows. Catalyzes the interconversion of 2-phosphoglycerate and 3-phosphoglycerate. This is 2,3-bisphosphoglycerate-dependent phosphoglycerate mutase from Treponema pallidum (strain Nichols).